Consider the following 67-residue polypeptide: MKPSLAADEMFSEGPGYMEMDESGGATGMMMDHLPSNDKHVHADFYNDFDDLFDEDNWAKMKTDGKQ.

Residues 1–31 (MKPSLAADEMFSEGPGYMEMDESGGATGMMM) form a disordered region.

The protein belongs to the CSN9 family. Probable component of the COP9 signalosome (CSN) complex.

Component of the COP9 signalosome complex (CSN), a complex involved in various cellular and developmental processes. The CSN complex is an essential regulator of the ubiquitin (Ubl) conjugation pathway by mediating the deneddylation of the cullin subunits of SCF-type E3 ligase complexes, leading to decrease the Ubl ligase activity. This chain is COP9 signalosome complex subunit 9 homolog, found in Drosophila melanogaster (Fruit fly).